A 110-amino-acid polypeptide reads, in one-letter code: BolA-like protein 3 (110 aa).

This sequence belongs to the BolA/IbaG family. Interacts with NFU1.

The protein localises to the mitochondrion. Its function is as follows. Acts as a mitochondrial iron-sulfur (Fe-S) cluster assembly factor that facilitates (Fe-S) cluster insertion into a subset of mitochondrial proteins. Probably acts together with NFU1. This is BolA-like protein 3 (BOLA3) from Bos taurus (Bovine).